Here is a 681-residue protein sequence, read N- to C-terminus: Cobalamin-dependent radical SAM methyltransferase TokK (681 aa).

The B12-binding domain occupies 1–144 (MSAELASRGR…ATRLSDHPDY (144 aa)). Cob(II)alamin-binding residues include asparagine 18, serine 72, tyrosine 74, valine 75, histidine 103, glycine 126, and glutamate 127. Residues 192 to 417 (RGLRFYALWE…RMYVERPGTP (226 aa)) enclose the Radical SAM core domain. Residues cysteine 206 and cysteine 210 each contribute to the [4Fe-4S] cluster site. Residue phenylalanine 212 coordinates 5'-deoxyadenosine. Cysteine 213 lines the [4Fe-4S] cluster pocket. Positions 214 and 249 each coordinate cob(II)alamin. 5'-deoxyadenosine is bound by residues glutamine 312, glutamate 349, and glycine 384.

It belongs to the methyltransferase superfamily. Requires [4Fe-4S] cluster as cofactor. Cob(II)alamin serves as cofactor.

The protein operates within antibiotic biosynthesis. In terms of biological role, methyltransferase involved in the biosynthesis of the beta-lactam carbapenem antibiotic asparenomycin. Catalyzes three consecutive S-adenosyl-L-methionine-dependent methylations to build out the C6-isopropyl side chain in a stereocontrolled manner. This Streptomyces tokunonensis protein is Cobalamin-dependent radical SAM methyltransferase TokK.